The following is a 444-amino-acid chain: Tubulin beta-7 chain (444 aa).

GTP contacts are provided by glutamine 11, glutamate 69, serine 138, glycine 142, threonine 143, glycine 144, asparagine 204, and asparagine 226. Glutamate 69 contributes to the Mg(2+) binding site.

Belongs to the tubulin family. In terms of assembly, dimer of alpha and beta chains. A typical microtubule is a hollow water-filled tube with an outer diameter of 25 nm and an inner diameter of 15 nM. Alpha-beta heterodimers associate head-to-tail to form protofilaments running lengthwise along the microtubule wall with the beta-tubulin subunit facing the microtubule plus end conferring a structural polarity. Microtubules usually have 13 protofilaments but different protofilament numbers can be found in some organisms and specialized cells. Requires Mg(2+) as cofactor. In terms of tissue distribution, expressed in roots, leaf sheaths, and suspension cultured cells.

The protein resides in the cytoplasm. The protein localises to the cytoskeleton. In terms of biological role, tubulin is the major constituent of microtubules, a cylinder consisting of laterally associated linear protofilaments composed of alpha- and beta-tubulin heterodimers. Microtubules grow by the addition of GTP-tubulin dimers to the microtubule end, where a stabilizing cap forms. Below the cap, tubulin dimers are in GDP-bound state, owing to GTPase activity of alpha-tubulin. This Oryza sativa subsp. japonica (Rice) protein is Tubulin beta-7 chain (TUBB7).